Reading from the N-terminus, the 134-residue chain is Secretin (134 aa).

An N-terminal signal peptide occupies residues 1–21 (MATRALLLLLLLPPLLLLAGC). The propeptide occupies 22 to 31 (AARPAPPRAP). Valine amide is present on Val-59. A Phosphoserine modification is found at Ser-63. A propeptide spanning residues 63–134 (SQQDPENNTA…PAAEGSPMPP (72 aa)) is cleaved from the precursor.

Belongs to the glucagon family.

Its subcellular location is the secreted. Functionally, hormone involved in different processes, such as regulation of the pH of the duodenal content, food intake and water homeostasis. Exerts its biological effects by binding to secretin receptor (SCTR), a G-protein coupled receptor expressed in the basolateral domain of several cells. Acts as a key gastrointestinal hormone by regulating the pH of the duodenal content. Secreted by S cells of the duodenum in the crypts of Lieberkuehn and regulates the pH of the duodenum by (1) inhibiting the secretion of gastric acid from the parietal cells of the stomach and (2) stimulating the production of bicarbonate (NaHCO(3)) from the ductal cells of the pancreas. Production of bicarbonate is essential to neutralize the pH and ensure no damage is done to the small intestine by the gastric acid. In addition to regulating the pH of the duodenal content, plays a central role in diet induced thermogenesis: acts as a non-sympathetic brown fat (BAT) activator mediating prandial thermogenesis, which consequentially induces satiation. Mechanistically, secretin released by the gut after a meal binds to secretin receptor (SCTR) in brown adipocytes, activating brown fat thermogenesis by stimulating lipolysis, which is sensed in the brain and promotes satiation. Also able to stimulate lipolysis in white adipocytes. Also plays an important role in cellular osmoregulation: released into the systemic circulation in response to hyperosmolality and acts at different levels in the hypothalamus, pituitary and kidney to regulate water homeostasis. Also plays a role in the central nervous system, possibly by acting as a neuropeptide hormone: required for hippocampal synaptic function and neural progenitor cells maintenance. This is Secretin from Sus scrofa (Pig).